A 297-amino-acid polypeptide reads, in one-letter code: MGVREKDPLAQLSLPPGFRFYPTDEELLVQYLCRKVAGYHFSLQVIGDIDLYKFDPWDLPSKALFGEKEWYFFSPRDRKYPNGSRPNRVAGSGYWKATGTDKIITADGRRVGIKKALVFYAGKAPKGTKTNWIMHEYRLIEHSRSHGSSKLDDWVLCRIYKKTSGSQRQAVTPVQACREEHSTNGSSSSSSSQLDDVLDSFPEIKDQSFNLPRMNSLRTILNGNFDWASLAGLNPIPELAPTNGLPSYGGYDAFRAAEGEAESGHVNRQQNSSGLTQSFGYSSSGFGVSGQTFEFRQ.

The NAC domain occupies 14–162; the sequence is LPPGFRFYPT…DWVLCRIYKK (149 aa). A DNA-binding region spans residues 111-168; sequence VGIKKALVFYAGKAPKGTKTNWIMHEYRLIEHSRSHGSSKLDDWVLCRIYKKTSGSQR. 2 disordered regions span residues 168-195 and 259-278; these read RQAV…SQLD and GEAE…LTQS. A compositionally biased stretch (polar residues) spans 266–277; it reads VNRQQNSSGLTQ.

Expressed in leaves and in root pericycle and epidermis.

It localises to the nucleus. In terms of biological role, transcription factors that bind specifically to the 5'-CATGTG-3' motif and with bipartite regions with 5'-CGTr-3' and 5'-YACG-3' as cores. Involved in the regulation of metabolic reprogramming during senescence by promoting the chloroplast protein degradation and the catabolism of lysine, phytol and free fatty acids via the induction of CV, LKR/SDH and PES1 expression. Also triggers the degradation of starch and the accumulation of mono- and disaccharides during senescence by enhancing the expression of AMY1, SFP1 and SWEET15. This is NAC domain-containing protein 72 from Arabidopsis thaliana (Mouse-ear cress).